The following is a 142-amino-acid chain: Putative transmembrane protein INAFM1 (142 aa).

The span at 1–19 (MRGTSCVGGGAESPGGAGL) shows a compositional bias: gly residues. Positions 1 to 22 (MRGTSCVGGGAESPGGAGLSEG) are disordered. The chain crosses the membrane as a helical span at residues 36–56 (YFLCVSLAAVLLAVYYGLIWV). Disordered regions lie at residues 61 to 83 (PAAPAGPQPSAPSPPCAARPGVP) and 99 to 142 (VPGG…RRPG). Residues 64–83 (PAGPQPSAPSPPCAARPGVP) show a composition bias toward pro residues. The segment covering 99–111 (VPGGPRPQLQLPL) has biased composition (low complexity). A compositionally biased stretch (basic and acidic residues) spans 117–142 (YSDPDRRPSRQTPRETPEAAEGRRPG).

Its subcellular location is the membrane. This Homo sapiens (Human) protein is Putative transmembrane protein INAFM1.